The following is a 338-amino-acid chain: Glycerol-3-phosphate dehydrogenase [NAD(P)+] (338 aa).

The NADPH site is built by tryptophan 12, histidine 33, and lysine 110. Sn-glycerol 3-phosphate contacts are provided by lysine 110, glycine 142, and serine 144. Residue alanine 146 participates in NADPH binding. Sn-glycerol 3-phosphate is bound by residues lysine 197, aspartate 250, serine 260, arginine 261, and asparagine 262. Catalysis depends on lysine 197, which acts as the Proton acceptor. Arginine 261 is an NADPH binding site. NADPH-binding residues include valine 286 and glutamate 288.

The protein belongs to the NAD-dependent glycerol-3-phosphate dehydrogenase family.

Its subcellular location is the cytoplasm. It catalyses the reaction sn-glycerol 3-phosphate + NAD(+) = dihydroxyacetone phosphate + NADH + H(+). The enzyme catalyses sn-glycerol 3-phosphate + NADP(+) = dihydroxyacetone phosphate + NADPH + H(+). It participates in membrane lipid metabolism; glycerophospholipid metabolism. In terms of biological role, catalyzes the reduction of the glycolytic intermediate dihydroxyacetone phosphate (DHAP) to sn-glycerol 3-phosphate (G3P), the key precursor for phospholipid synthesis. The protein is Glycerol-3-phosphate dehydrogenase [NAD(P)+] of Acidobacterium capsulatum (strain ATCC 51196 / DSM 11244 / BCRC 80197 / JCM 7670 / NBRC 15755 / NCIMB 13165 / 161).